The chain runs to 414 residues: Apolipoprotein N-acyltransferase (414 aa).

Helical transmembrane passes span 19–39 (GIAL…HFGI), 40–60 (TSPL…LKLP), 63–83 (SGFA…ALSF), 91–111 (LIPF…SMAL), 121–141 (LLLW…VPEV), and 153–173 (LSFG…QRWL). Positions 202–414 (IETHIPQEIR…NRSPSGIIAP (213 aa)) constitute a CN hydrolase domain. Glu-243 functions as the Proton acceptor in the catalytic mechanism. Residue Lys-298 is part of the active site. Cys-351 functions as the Nucleophile in the catalytic mechanism.

It belongs to the CN hydrolase family. Apolipoprotein N-acyltransferase subfamily.

It is found in the cell inner membrane. It carries out the reaction N-terminal S-1,2-diacyl-sn-glyceryl-L-cysteinyl-[lipoprotein] + a glycerophospholipid = N-acyl-S-1,2-diacyl-sn-glyceryl-L-cysteinyl-[lipoprotein] + a 2-acyl-sn-glycero-3-phospholipid + H(+). The protein operates within protein modification; lipoprotein biosynthesis (N-acyl transfer). In terms of biological role, catalyzes the phospholipid dependent N-acylation of the N-terminal cysteine of apolipoprotein, the last step in lipoprotein maturation. This chain is Apolipoprotein N-acyltransferase, found in Wolinella succinogenes (strain ATCC 29543 / DSM 1740 / CCUG 13145 / JCM 31913 / LMG 7466 / NCTC 11488 / FDC 602W) (Vibrio succinogenes).